A 542-amino-acid chain; its full sequence is Importin subunit alpha (542 aa).

Position 1 is an N-acetylmethionine (methionine 1). The segment covering 1 to 11 has biased composition (polar residues); that stretch reads MDNGTDSSTSK. One can recognise an IBB domain in the interval 1–65; sequence MDNGTDSSTS…RNFIPPTDGA (65 aa). Residues 1–77 form a disordered region; the sequence is MDNGTDSSTS…DEEDESSVSA (77 aa). A compositionally biased stretch (basic and acidic residues) spans 27–53; sequence FSADELRRRRDTQQVELRKAKRDEALA. One copy of the ARM 1; truncated repeat lies at 89 to 122; it reads LPQMTQQLNSDDMQEQLSATVKFRQILSREHRPP. 8 ARM repeats span residues 123–162, 163–204, 205–251, 252–288, 289–330, 331–372, 373–417, and 418–471; these read IDVV…ASGT, SAQT…AGDS, TDYR…PQPD, WSVV…SDGP, QEAI…VTGN, DLQT…TAGN, TEQI…GLQR, and PDII…LNIN. Residues 209-335 form an NLS binding site 1 region; that stretch reads DYVLQCNAME…IVTGNDLQTQ (127 aa). An NLS binding site 2 region spans residues 419–505; it reads DIIRYLVSQG…KIYEKAYKII (87 aa). One copy of the ARM 10; atypical repeat lies at 472 to 508; it reads ENADFIEKAGGMEKIFNCQQNENDKIYEKAYKIIETY.

Belongs to the importin alpha family. In terms of assembly, forms a complex with an importin beta subunit. In the nucleus, interacts with NUP2 which accelerate release of NLSs, NUP2 is subsequently displaced by CSE1:RanGTP which mediates re-export and recycling. Interacts with HEH2, SHE2, and STS1.

Its subcellular location is the cytoplasm. The protein resides in the perinuclear region. Functionally, functions in nuclear protein import as an adapter protein for importin beta nuclear receptors. Binds specifically and directly to substrates containing either a simple or bipartite NLS motif. Promotes docking of import substrates to the nuclear envelope. Together with importin beta KAP95, mediates nuclear import of transcription factor GCN4. Together with tethering factor STS1, targets the proteasome to the nucleus. In Saccharomyces cerevisiae (strain ATCC 204508 / S288c) (Baker's yeast), this protein is Importin subunit alpha (SRP1).